Here is a 987-residue protein sequence, read N- to C-terminus: uncharacterized protein (987 aa).

The next 2 membrane-spanning stretches (helical) occupy residues 12-32 (FIYL…SVSG) and 958-978 (VENN…LGIL).

To M.jannaschii MJ1393 and A.fulgidus AF2028.

The protein resides in the cell membrane. This is an uncharacterized protein from Methanocaldococcus jannaschii (strain ATCC 43067 / DSM 2661 / JAL-1 / JCM 10045 / NBRC 100440) (Methanococcus jannaschii).